A 416-amino-acid chain; its full sequence is Tumor necrosis factor receptor superfamily member 16 (416 aa).

Residues 1–19 form the signal peptide; it reads MAGFVPLLLLLLPAGPTWG. TNFR-Cys repeat units follow at residues 23–57, 58–99, 100–138, and 140–180; these read KCLT…TVCE, PCLD…DAVC, RCAY…DTVC, and ECPE…DAEC. 12 cysteine pairs are disulfide-bonded: Cys-24-Cys-35, Cys-36-Cys-49, Cys-39-Cys-56, Cys-59-Cys-75, Cys-78-Cys-91, Cys-81-Cys-99, Cys-101-Cys-114, Cys-117-Cys-130, Cys-120-Cys-138, Cys-141-Cys-156, Cys-159-Cys-172, and Cys-162-Cys-180. Over 29-239 the chain is Extracellular; sequence YTTSGECCKA…PVVSRGTADN (211 aa). The N-linked (GlcNAc...) asparagine glycan is linked to Asn-52. A helical membrane pass occupies residues 240–261; it reads LIPVYCSILAAVVVGLVAYIAF. Residues 262-416 are Cytoplasmic-facing; that stretch reads KRWNSCKQNK…YSESTATSPV (155 aa). 2 stretches are compositionally biased toward polar residues: residues 270–284 and 294–315; these read NKQG…QTPS and SGIS…STQG. The segment at 270-328 is disordered; sequence NKQGANNRPVNQTPSPEGEKLHSDSGISVDSQSLHDQQPPNQSTQGPAPKGDGSLYASL. A Death domain is found at 333–410; that stretch reads QEEVEKLLSS…DIAESLYSES (78 aa).

Homodimer; disulfide-linked. Heterodimer with SORCS2. The extracellular domains of the heterodimer bind NGF. In terms of processing, N- and O-glycosylated. Post-translationally, phosphorylated on serine residues. Detected in embryonic dorsal root ganglion and retina.

The protein resides in the cell membrane. Its subcellular location is the perikaryon. It is found in the cell projection. The protein localises to the growth cone. It localises to the dendritic spine. Functionally, low affinity receptor which can bind to NGF, BDNF, NTF3, and NTF4. Forms a heterodimeric receptor with SORCS2 that binds the precursor forms of NGF, BDNF and NTF3 with high affinity, and has much lower affinity for mature NGF and BDNF. Plays an important role in differentiation and survival of specific neuronal populations during development. Can mediate cell survival as well as cell death of neural cells. Plays a role in the inactivation of RHOA. Necessary for the circadian oscillation of clock genes in the suprachiasmatic nucleus (SCmgetaN) of the brain and in liver and of the genes involved in glucose and lipid metabolism in the liver. This chain is Tumor necrosis factor receptor superfamily member 16 (NGFR), found in Gallus gallus (Chicken).